A 271-amino-acid chain; its full sequence is Elongation factor Ts (271 aa).

Residues 76–79 (TDFV) form an involved in Mg(2+) ion dislocation from EF-Tu region.

It belongs to the EF-Ts family.

The protein localises to the cytoplasm. In terms of biological role, associates with the EF-Tu.GDP complex and induces the exchange of GDP to GTP. It remains bound to the aminoacyl-tRNA.EF-Tu.GTP complex up to the GTP hydrolysis stage on the ribosome. The protein is Elongation factor Ts of Mycobacterium bovis (strain BCG / Pasteur 1173P2).